A 300-amino-acid chain; its full sequence is Diphthine methyl ester synthase (300 aa).

S-adenosyl-L-methionine contacts are provided by residues L9, D85, G88, 113–114 (SV), and L164. At S172 the chain carries Phosphoserine. 2 residues coordinate S-adenosyl-L-methionine: L222 and H247. S298 is subject to Phosphoserine.

This sequence belongs to the diphthine synthase family.

The protein localises to the cytoplasm. The enzyme catalyses 2-[(3S)-amino-3-carboxypropyl]-L-histidyl-[translation elongation factor 2] + 4 S-adenosyl-L-methionine = diphthine methyl ester-[translation elongation factor 2] + 4 S-adenosyl-L-homocysteine + 3 H(+). Its pathway is protein modification; peptidyl-diphthamide biosynthesis. S-adenosyl-L-methionine-dependent methyltransferase that catalyzes four methylations of the modified target histidine residue in translation elongation factor 2 (EF-2), to form an intermediate called diphthine methyl ester. The four successive methylation reactions represent the second step of diphthamide biosynthesis. The protein is Diphthine methyl ester synthase (DPH5) of Saccharomyces cerevisiae (strain ATCC 204508 / S288c) (Baker's yeast).